The primary structure comprises 1148 residues: Maintenance of telomere capping protein 5 (1148 aa).

5 WD repeats span residues 63 to 106 (HHIT…SNAI), 112 to 152 (GHSR…RPFY), 156 to 195 (SWRSAASQVKWNYKDPNVLASSHGNDIFVWDLRKGSTPLC), 199 to 239 (GHVS…TESK), and 299 to 348 (GHSD…YGKV). Residues 432-543 (EEVSAIGHKF…RFVLGEKVSL (112 aa)) enclose the RWD domain. The residue at position 759 (Ser759) is a Phosphoserine. The disordered stretch occupies residues 963–990 (THNTLNGSSKFTEPAQKQGSRAISSSPF). Over residues 964–990 (HNTLNGSSKFTEPAQKQGSRAISSSPF) the composition is skewed to polar residues.

This sequence belongs to the WD repeat WDR59 family. As to quaternary structure, component of the SEA complex composed of at least IML1/SEA1, RTC1/SEA2, MTC5/SEA3, NPR2, NPR3, SEA4, SEC13 and SEH1.

It is found in the vacuole membrane. Functionally, component of the SEA complex which coats the vacuolar membrane and is involved in intracellular trafficking, autophagy, response to nitrogen starvation, and amino acid biogenesis. May be involved in telomere capping. The chain is Maintenance of telomere capping protein 5 (MTC5) from Saccharomyces cerevisiae (strain ATCC 204508 / S288c) (Baker's yeast).